The primary structure comprises 243 residues: 2-C-methyl-D-erythritol 4-phosphate cytidylyltransferase (243 aa).

It belongs to the IspD/TarI cytidylyltransferase family. IspD subfamily.

The enzyme catalyses 2-C-methyl-D-erythritol 4-phosphate + CTP + H(+) = 4-CDP-2-C-methyl-D-erythritol + diphosphate. It functions in the pathway isoprenoid biosynthesis; isopentenyl diphosphate biosynthesis via DXP pathway; isopentenyl diphosphate from 1-deoxy-D-xylulose 5-phosphate: step 2/6. Its function is as follows. Catalyzes the formation of 4-diphosphocytidyl-2-C-methyl-D-erythritol from CTP and 2-C-methyl-D-erythritol 4-phosphate (MEP). This is 2-C-methyl-D-erythritol 4-phosphate cytidylyltransferase from Pelodictyon phaeoclathratiforme (strain DSM 5477 / BU-1).